An 816-amino-acid chain; its full sequence is Probable disease resistance protein At4g33300 (816 aa).

The RPW8 domain occupies 1-149; sequence MAITDFFAGE…SLDRVIQQVG (149 aa). Residues 95–111 are a coiled coil; that stretch reads TLARKMEKLEKTISNFL. One can recognise an NB-ARC domain in the interval 191–443; the sequence is VKKMMFESQG…LDVLINIWIE (253 aa). Residue 207–214 participates in ATP binding; that stretch reads GMGGVGKT. A coiled-coil region spans residues 399 to 415; sequence SRLLRQMEASLDNLDQT. LRR repeat units follow at residues 681–704, 705–727, 729–751, and 753–774; these read SLSCLSITNCPRLGELPKNLSKLQ, ALEILRLYACPELKTLPGEICEL, GLKYLDISQCVSLSCLPEEIGKL, and KLEKIDMRECCFSDRPSSAVSL.

This sequence belongs to the disease resistance NB-LRR family.

Probable disease resistance protein. This is Probable disease resistance protein At4g33300 from Arabidopsis thaliana (Mouse-ear cress).